The sequence spans 432 residues: MQLIDLVKNAKEATYKLQSLNTDIKNNALLEIAKKIEENKDKIFEANKKDLEYAQKLLDENKISKSMFNRLKLDENKLIDVVSGIRDVVKLEDPINKVLLETELDDNLLLKKISCPIGLIAVIFEARPDVISQISSLCIKSSNAVILKGGSEGENTNKAIYNIIEETLNNIKEFPKNSVNLVFTREDIKELLSMDKYIDLIIPRGGNSLVQYIKSNTNIPVLGHADGICHLYIDESADQEKALKICLDSKAQYPSACNAVETILVNKNIASEYLPKLYNLFKENEIKMNADAEVKKILTSSDIGEVKEWHFEYGDKEVSLKIVSDTEEAYNHINKYGSHHTDSIISENKDNIEKFMTFVDSANVYCNASTRFSDGFRYGFGAEVGISTNKTHARGPVGLEGLTIYKYKIFGNYQIVDDYVNHRASFKHKRIK.

This sequence belongs to the gamma-glutamyl phosphate reductase family.

The protein resides in the cytoplasm. The catalysed reaction is L-glutamate 5-semialdehyde + phosphate + NADP(+) = L-glutamyl 5-phosphate + NADPH + H(+). The protein operates within amino-acid biosynthesis; L-proline biosynthesis; L-glutamate 5-semialdehyde from L-glutamate: step 2/2. Its function is as follows. Catalyzes the NADPH-dependent reduction of L-glutamate 5-phosphate into L-glutamate 5-semialdehyde and phosphate. The product spontaneously undergoes cyclization to form 1-pyrroline-5-carboxylate. The protein is Gamma-glutamyl phosphate reductase of Brachyspira hyodysenteriae (strain ATCC 49526 / WA1).